A 319-amino-acid chain; its full sequence is Ubiquinone biosynthesis protein COQ9, mitochondrial (319 aa).

The transit peptide at 1–45 directs the protein to the mitochondrion; sequence MAATVAFSGVLRRAGWRLLQLRCLPVPRCRPALAPRAFRASAMQL. Positions 17-32 match the SIFI-degron motif; it reads RLLQLRCLPVPRCRPA. The interval 46–99 is disordered; sequence RSLDQQKDQPPPSSSQQQSEAQGAEEPNPEALRSPPRYTDQGGEEEEDYESEEQ. Residues 87 to 98 show a composition bias toward acidic residues; the sequence is GGEEEEDYESEE. Lys-176 bears the N6-acetyllysine mark. Arg-245 is a binding site for a 1,2-diacylglycero-3-phosphoethanolamine.

The protein belongs to the COQ9 family. As to quaternary structure, homodimer. Heterodimer; two heterodimers of COQ7:COQ9 come together on the same side of the lipid pseudo-bilayer and form a curved tetramer with a hydrophobic surface suitable for membrane interaction. These two tetramers assemble into a soluble octamer with a pseudo-bilayer of lipids captured within. Interacts with COQ7; this interaction allows ubiquinone (CoQ) isoprene intermediates presentation to COQ7 and facilitates the COQ7-mediated hydroxylase step. In terms of processing, in response to mitochondrial stress, the precursor protein is ubiquitinated by the SIFI complex in the cytoplasm before mitochondrial import, leading to its degradation. Within the SIFI complex, UBR4 initiates ubiquitin chain that are further elongated or branched by KCMF1.

The protein resides in the mitochondrion. Its pathway is cofactor biosynthesis; ubiquinone biosynthesis. In terms of biological role, membrane-associated protein that warps the membrane surface to access and bind aromatic isoprenes with high specificity, including ubiquinone (CoQ) isoprene intermediates and presents them directly to COQ7, therefore facilitating the COQ7-mediated hydroxylase step. Participates in the biosynthesis of coenzyme Q, also named ubiquinone, an essential lipid-soluble electron transporter for aerobic cellular respiration. This chain is Ubiquinone biosynthesis protein COQ9, mitochondrial, found in Bos taurus (Bovine).